The chain runs to 360 residues: Photosystem II protein D1 2 (360 aa).

Topologically, residues Met-1–Gly-31 are cytoplasmic. Residues Trp-32–Ile-53 traverse the membrane as a helical segment. At Ala-54–Gly-110 the chain is on the lumenal, thylakoid side. The chain crosses the membrane as a helical span at residues Pro-111–Ser-134. His-118 is a chlorophyll a binding site. Tyr-126 contacts pheophytin a. The Cytoplasmic segment spans residues Tyr-135–Trp-142. Residues Ile-143 to Tyr-161 traverse the membrane as a helical segment. Tyr-147 contributes to the pheophytin a binding site. Residues Pro-162–Asn-191 are Lumenal, thylakoid-facing. Residues Asp-170 and Glu-189 each contribute to the [CaMn4O5] cluster site. The chain crosses the membrane as a helical span at residues Ile-192–Leu-218. His-198 is a chlorophyll a binding site. A quinone-binding residues include His-215, Ser-264, and Phe-265. His-215 is a binding site for Fe cation. At Val-219 to Ser-270 the chain is on the cytoplasmic side. The chain crosses the membrane as a helical span at residues Leu-271 to Phe-295. His-272 is a binding site for Fe cation. The Lumenal, thylakoid segment spans residues Asn-296–Gly-360. 5 residues coordinate [CaMn4O5] cluster: His-332, Glu-333, His-337, Asp-342, and Ala-344. Positions Ser-345–Gly-360 are excised as a propeptide.

It belongs to the reaction center PufL/M/PsbA/D family. In terms of assembly, PSII is composed of 1 copy each of membrane proteins PsbA, PsbB, PsbC, PsbD, PsbE, PsbF, PsbH, PsbI, PsbJ, PsbK, PsbL, PsbM, PsbT, PsbX, PsbY, PsbZ, Psb30/Ycf12, peripheral proteins PsbO, CyanoQ (PsbQ), PsbU, PsbV and a large number of cofactors. It forms dimeric complexes. It depends on The D1/D2 heterodimer binds P680, chlorophylls that are the primary electron donor of PSII, and subsequent electron acceptors. It shares a non-heme iron and each subunit binds pheophytin, quinone, additional chlorophylls, carotenoids and lipids. D1 provides most of the ligands for the Mn4-Ca-O5 cluster of the oxygen-evolving complex (OEC). There is also a Cl(-1) ion associated with D1 and D2, which is required for oxygen evolution. The PSII complex binds additional chlorophylls, carotenoids and specific lipids. as a cofactor. In terms of processing, C-terminally processed by CtpA; processing is essential to allow assembly of the oxygen-evolving complex and photosynthetic growth. Post-translationally, tyr-161 forms a radical intermediate that is referred to as redox-active TyrZ, YZ or Y-Z.

The protein localises to the cellular thylakoid membrane. The enzyme catalyses 2 a plastoquinone + 4 hnu + 2 H2O = 2 a plastoquinol + O2. Its function is as follows. Photosystem II (PSII) is a light-driven water:plastoquinone oxidoreductase that uses light energy to abstract electrons from H(2)O, generating O(2) and a proton gradient subsequently used for ATP formation. It consists of a core antenna complex that captures photons, and an electron transfer chain that converts photonic excitation into a charge separation. The D1/D2 (PsbA/PsbD) reaction center heterodimer binds P680, the primary electron donor of PSII as well as several subsequent electron acceptors. The chain is Photosystem II protein D1 2 from Synechocystis sp. (strain ATCC 27184 / PCC 6803 / Kazusa).